The following is a 94-amino-acid chain: Putative membrane protein insertion efficiency factor (94 aa).

The protein belongs to the UPF0161 family.

It is found in the cell inner membrane. Its function is as follows. Could be involved in insertion of integral membrane proteins into the membrane. This chain is Putative membrane protein insertion efficiency factor, found in Albidiferax ferrireducens (strain ATCC BAA-621 / DSM 15236 / T118) (Rhodoferax ferrireducens).